The following is a 634-amino-acid chain: Chaperone protein HtpG (634 aa).

Residues 1–344 form an a; substrate-binding region; it reads MSETATQNKE…SNDLPLNVSR (344 aa). Positions 345–561 are b; the sequence is EILQDNKVTQ…DFEMGTQMAK (217 aa). The interval 562 to 634 is c; that stretch reads LLEAAGQAAP…GAINELLTKR (73 aa).

Belongs to the heat shock protein 90 family. Homodimer.

Its subcellular location is the cytoplasm. Molecular chaperone. Has ATPase activity. This chain is Chaperone protein HtpG, found in Vibrio atlanticus (strain LGP32) (Vibrio splendidus (strain Mel32)).